Consider the following 898-residue polypeptide: Histone-lysine N-methyltransferase mes-4 (898 aa).

The disordered stretch occupies residues 1-68; the sequence is MLPSSGDSSK…APILTNAPKD (68 aa). Residues 36 to 51 are compositionally biased toward polar residues; the sequence is QRNATPQGAGSETSSN. 2 consecutive PHD-type zinc fingers follow at residues 126–214 and 303–355; these read DSKC…CNLD and IKAC…CVCG. One can recognise an SET domain in the interval 537–665; the sequence is EKIKLAATLC…DGDEITFSYN (129 aa). The 17-residue stretch at 671-687 folds into the Post-SET domain; the sequence is NLPDCECGAENCMGTMG. Residues 689-847 are disordered; that stretch reads AKREKPEVAD…SLQTIQETGK (159 aa). The span at 692–704 shows a compositional bias: basic and acidic residues; that stretch reads EKPEVADSSEKAA. The span at 705–719 shows a compositional bias: basic residues; sequence KKNKSSKKKSVKNQN. Low complexity-rich tracts occupy residues 737–751 and 761–773; these read ISPS…SSTS and SQNK…NSNQ. Positions 774 to 788 are enriched in polar residues; it reads PVADTGSTLSTSTEL. A compositionally biased stretch (low complexity) spans 802-811; it reads SSRSRAASSS.

It belongs to the class V-like SAM-binding methyltransferase superfamily. Histone-lysine methyltransferase family. SET2 subfamily. In terms of tissue distribution, in adults, it is predominantly expressed in the germline, and weakly expressed in intestinal cells.

The protein localises to the nucleus. The protein resides in the chromosome. The catalysed reaction is L-lysyl(36)-[histone H3] + 2 S-adenosyl-L-methionine = N(6),N(6)-dimethyl-L-lysyl(36)-[histone H3] + 2 S-adenosyl-L-homocysteine + 2 H(+). Histone methyltransferase. Dimethylates 'Lys-36' of histone H3, a specific tag for epigenetic transcriptional activation. Plays a central role in early development and is responsible for all H3 'Lys-36' dimethylation until about the 40-cell stage. Indirectly involved in the global inactivation of the X chromosomes in germline cells, possibly by excluding the mes-2-mes-3-mes-6 repressive Polycomb complex from the autosomes. Not related to transcription elongation. Required for small-RNA-induced H3K27 trimethylation. May suppress sensitivity to RNAi. May regulate the expression of genes required for vulval development. In Caenorhabditis elegans, this protein is Histone-lysine N-methyltransferase mes-4.